The following is a 156-amino-acid chain: MPRKGHVQKREVMPDPVYDDKTVTKLINNIMLDGKKGTAQKIVYGAFDIIKETTGEDALEVFYKAMNNIMPILEVKTRRIGGANYQVPIEVRPERRQTLGLRWLTTYTRARGEKTMVEKLAKEIMDAANNTGASVKKREDVHKMAEANKAFAHYRY.

It belongs to the universal ribosomal protein uS7 family. In terms of assembly, part of the 30S ribosomal subunit. Contacts proteins S9 and S11.

Its function is as follows. One of the primary rRNA binding proteins, it binds directly to 16S rRNA where it nucleates assembly of the head domain of the 30S subunit. Is located at the subunit interface close to the decoding center, probably blocks exit of the E-site tRNA. The sequence is that of Small ribosomal subunit protein uS7 from Finegoldia magna (strain ATCC 29328 / DSM 20472 / WAL 2508) (Peptostreptococcus magnus).